A 284-amino-acid chain; its full sequence is Tropomyosin (284 aa).

M1 is subject to N-acetylmethionine. 2 disordered regions span residues 1-49 (MDAI…NQKK) and 103-126 (EERL…SERM). Residues 1-284 (MDAIKKKMQA…DQAFSELSGF (284 aa)) are a coiled coil. Basic and acidic residues predominate over residues 12-45 (KLEKDNAMDKADTLEQQNKEANLRAEKTEEEIRA).

This sequence belongs to the tropomyosin family. Homodimer. Expressed in leg muscle and chest protection muscle (at protein level).

Its function is as follows. Tropomyosin, in association with the troponin complex, plays a central role in the calcium dependent regulation of muscle contraction. The polypeptide is Tropomyosin (Chionoecetes opilio (Atlantic snow crab)).